Consider the following 307-residue polypeptide: Ventral anterior homeobox 2 (307 aa).

Disordered regions lie at residues 1–70 (MFDQ…DKLL), 155–175 (RTKQ…STSE), and 197–254 (PPPN…PSPR). A compositionally biased stretch (basic and acidic residues) spans 25-38 (CRDRGRESKSRTEV). Residues 46–62 (SSTDTPGTSASTPTSSS) are compositionally biased toward low complexity. A DNA-binding region (homeobox) is located at residues 103 to 162 (PKRTRTSFTAEQLYRLELEFQRCQYVVGRERTELARQLNLSETQVKVWFQNRRTKQKKDQ). Residues 159–170 (KKDQTKDTDKRS) show a composition bias toward basic and acidic residues. Low complexity predominate over residues 202 to 249 (LLAHPHPGNGSLLGSPSVSTSSGVSSSTTPPGAGSGTFGLSLSSLSGT).

It belongs to the EMX homeobox family. As to expression, expressed in the anterior neural keel and later in the preoptic area, optic stalk and ventral retina.

The protein resides in the nucleus. Functionally, transcription factor that may function in dorsoventral specification of the forebrain. Required for closure of the choroid fissure and together with vax1 is required for optic nerve differentiation and to limit retinal development to the optic cup. This chain is Ventral anterior homeobox 2 (vax2), found in Danio rerio (Zebrafish).